A 380-amino-acid chain; its full sequence is 1-deoxy-D-xylulose 5-phosphate reductoisomerase (380 aa).

Positions 10, 11, 12, 13, 36, 37, 38, and 120 each coordinate NADPH. Residue K121 coordinates 1-deoxy-D-xylulose 5-phosphate. Residue E122 participates in NADPH binding. D146 provides a ligand contact to Mn(2+). The 1-deoxy-D-xylulose 5-phosphate site is built by S147, E148, S172, and H195. E148 is a binding site for Mn(2+). G201 serves as a coordination point for NADPH. The 1-deoxy-D-xylulose 5-phosphate site is built by S208, N213, K214, and E217. Position 217 (E217) interacts with Mn(2+).

This sequence belongs to the DXR family. It depends on Mg(2+) as a cofactor. Mn(2+) serves as cofactor.

It carries out the reaction 2-C-methyl-D-erythritol 4-phosphate + NADP(+) = 1-deoxy-D-xylulose 5-phosphate + NADPH + H(+). The protein operates within isoprenoid biosynthesis; isopentenyl diphosphate biosynthesis via DXP pathway; isopentenyl diphosphate from 1-deoxy-D-xylulose 5-phosphate: step 1/6. Functionally, catalyzes the NADPH-dependent rearrangement and reduction of 1-deoxy-D-xylulose-5-phosphate (DXP) to 2-C-methyl-D-erythritol 4-phosphate (MEP). The polypeptide is 1-deoxy-D-xylulose 5-phosphate reductoisomerase (Listeria welshimeri serovar 6b (strain ATCC 35897 / DSM 20650 / CCUG 15529 / CIP 8149 / NCTC 11857 / SLCC 5334 / V8)).